The sequence spans 262 residues: Type III pantothenate kinase (262 aa).

ATP is bound at residue Asp-5–Lys-12. Residues Tyr-102 and Gly-110–Arg-113 contribute to the substrate site. The active-site Proton acceptor is Asp-112. Asp-132 contributes to the K(+) binding site. Residue Thr-135 participates in ATP binding. Substrate is bound at residue Thr-190.

It belongs to the type III pantothenate kinase family. As to quaternary structure, homodimer. It depends on NH4(+) as a cofactor. Requires K(+) as cofactor.

Its subcellular location is the cytoplasm. The enzyme catalyses (R)-pantothenate + ATP = (R)-4'-phosphopantothenate + ADP + H(+). It functions in the pathway cofactor biosynthesis; coenzyme A biosynthesis; CoA from (R)-pantothenate: step 1/5. Catalyzes the phosphorylation of pantothenate (Pan), the first step in CoA biosynthesis. The protein is Type III pantothenate kinase of Idiomarina loihiensis (strain ATCC BAA-735 / DSM 15497 / L2-TR).